The chain runs to 427 residues: ATP-dependent RNA helicase DDX39A (427 aa).

The segment covering 1-19 (MAEQDVENDLLDYDEEEEP) has biased composition (acidic residues). Residues 1–34 (MAEQDVENDLLDYDEEEEPQAPQESTPAPPKKDI) are disordered. N-acetylalanine is present on Ala-2. Residue Lys-31 forms a Glycyl lysine isopeptide (Lys-Gly) (interchain with G-Cter in SUMO2) linkage. An N6-acetyllysine; alternate modification is found at Lys-35. Lys-35 is covalently cross-linked (Glycyl lysine isopeptide (Lys-Gly) (interchain with G-Cter in SUMO2); alternate). Residue Ser-37 is modified to Phosphoserine. The short motif at 44-72 (SGFRDFLLKPELLRAIVDCGFEHPSEVQH) is the Q motif element. In terms of domain architecture, Helicase ATP-binding spans 75–248 (IPQAILGMDV…RKFMQDPMEV (174 aa)). 88–95 (AKSGMGKT) provides a ligand contact to ATP. Residues Lys-154 and Lys-162 each participate in a glycyl lysine isopeptide (Lys-Gly) (interchain with G-Cter in SUMO2) cross-link. Thr-171 is subject to Phosphothreonine. The DECD box signature appears at 195-198 (DECD). Glycyl lysine isopeptide (Lys-Gly) (interchain with G-Cter in SUMO2) cross-links involve residues Lys-240 and Lys-255. In terms of domain architecture, Helicase C-terminal spans 260 to 421 (GLQQYYVKLK…ELPEEIDIST (162 aa)). A Phosphoserine modification is found at Ser-426.

This sequence belongs to the DEAD box helicase family. DECD subfamily. Binds ALYREF/THOC4 and DDX39B/BAT1. Interacts with the apo-AREX complex component SARNP. Interacts with MX1. Interacts with MCM3AP isoform GANP. Interacts with ECD. Interacts with PHAX; this interaction stimulates PHAX RNA binding activity. In terms of assembly, (Microbial infection) Interacts with human cytomegalovirus/HHV-5 protein UL69. Post-translationally, SUMOylated by RANBP2; SUMOylation modification affects its ability to bind RNA. As to expression, detected in testis, and at lower levels in brain, kidney, lung, thymus, spleen and salivary gland.

Its subcellular location is the nucleus. It localises to the cytoplasm. The enzyme catalyses ATP + H2O = ADP + phosphate + H(+). In terms of biological role, helicase that plays an essential role in mRNA export and is involved in multiple steps in RNA metabolism including alternative splicing. Regulates nuclear mRNA export to the cytoplasm through association with ECD. Also involved in spliceosomal uridine-rich small nuclear RNA (U snRNA) export by stimulating the RNA binding of adapter PHAX. Plays a role in the negative regulation of type I IFN production by increasing the nuclear retention of antiviral transcripts and thus reducing their protein expression. Independently of the interferon pathway, plays an antiviral role against alphaviruses by binding to a 5' conserved sequence element in the viral genomic RNA. This Homo sapiens (Human) protein is ATP-dependent RNA helicase DDX39A (DDX39A).